Reading from the N-terminus, the 306-residue chain is 4-hydroxy-3-methylbut-2-enyl diphosphate reductase (306 aa).

Cysteine 12 is a binding site for [4Fe-4S] cluster. 2 residues coordinate (2E)-4-hydroxy-3-methylbut-2-enyl diphosphate: histidine 41 and histidine 74. Residues histidine 41 and histidine 74 each coordinate dimethylallyl diphosphate. Isopentenyl diphosphate contacts are provided by histidine 41 and histidine 74. Cysteine 96 is a binding site for [4Fe-4S] cluster. Histidine 124 is a binding site for (2E)-4-hydroxy-3-methylbut-2-enyl diphosphate. Position 124 (histidine 124) interacts with dimethylallyl diphosphate. Histidine 124 is an isopentenyl diphosphate binding site. The Proton donor role is filled by glutamate 126. Threonine 164 contributes to the (2E)-4-hydroxy-3-methylbut-2-enyl diphosphate binding site. Cysteine 194 contributes to the [4Fe-4S] cluster binding site. Residues serine 222, serine 223, asparagine 224, and serine 266 each coordinate (2E)-4-hydroxy-3-methylbut-2-enyl diphosphate. Dimethylallyl diphosphate contacts are provided by serine 222, serine 223, asparagine 224, and serine 266. Isopentenyl diphosphate contacts are provided by serine 222, serine 223, asparagine 224, and serine 266.

This sequence belongs to the IspH family. Requires [4Fe-4S] cluster as cofactor.

It carries out the reaction isopentenyl diphosphate + 2 oxidized [2Fe-2S]-[ferredoxin] + H2O = (2E)-4-hydroxy-3-methylbut-2-enyl diphosphate + 2 reduced [2Fe-2S]-[ferredoxin] + 2 H(+). The catalysed reaction is dimethylallyl diphosphate + 2 oxidized [2Fe-2S]-[ferredoxin] + H2O = (2E)-4-hydroxy-3-methylbut-2-enyl diphosphate + 2 reduced [2Fe-2S]-[ferredoxin] + 2 H(+). Its pathway is isoprenoid biosynthesis; dimethylallyl diphosphate biosynthesis; dimethylallyl diphosphate from (2E)-4-hydroxy-3-methylbutenyl diphosphate: step 1/1. It participates in isoprenoid biosynthesis; isopentenyl diphosphate biosynthesis via DXP pathway; isopentenyl diphosphate from 1-deoxy-D-xylulose 5-phosphate: step 6/6. Its function is as follows. Catalyzes the conversion of 1-hydroxy-2-methyl-2-(E)-butenyl 4-diphosphate (HMBPP) into a mixture of isopentenyl diphosphate (IPP) and dimethylallyl diphosphate (DMAPP). Acts in the terminal step of the DOXP/MEP pathway for isoprenoid precursor biosynthesis. This is 4-hydroxy-3-methylbut-2-enyl diphosphate reductase from Ruthia magnifica subsp. Calyptogena magnifica.